We begin with the raw amino-acid sequence, 406 residues long: MKNGMAECSVCRSRLVSPSSKAISRAYDNYNYKIRVSSKQRALNVFLVVGDCMLVGLQPVLVYMSKVDGKFNFSPISVNFLTEIAKVIFAMVMLLFQARHQKVGEKPLLSLSTFVQAARNNMLLAVPAGLYAINNYLKFTMQLYFNPATVKMLSNLKVLVIAVLLKMIMKRRFSIIQWEALALLLIGISINQLRSLPEGATTVAVPIATGAYICTFIFVTVPSLASVYNEYALKSQYDTSIYLQNLFLYGYGAIFNFLGILGTVIYKGPGSFDILQGHSRATMFLILNNAAQGILSSFFFKYADTILKKYSSTVATIFTGIASAALFGHILTMNFLLGISIVFISMHQFFSPLSKAKDEQQNGNIELVDAKDGHRAKDSFINMAAGATEEASHRIESDDRVPLLPR.

Residues 1–41 are Cytoplasmic-facing; that stretch reads MKNGMAECSVCRSRLVSPSSKAISRAYDNYNYKIRVSSKQR. The helical transmembrane segment at 42 to 62 threads the bilayer; it reads ALNVFLVVGDCMLVGLQPVLV. Topologically, residues 63–75 are lumenal; sequence YMSKVDGKFNFSP. A helical transmembrane segment spans residues 76-96; sequence ISVNFLTEIAKVIFAMVMLLF. At 97–148 the chain is on the cytoplasmic side; sequence QARHQKVGEKPLLSLSTFVQAARNNMLLAVPAGLYAINNYLKFTMQLYFNPA. The chain crosses the membrane as a helical span at residues 149-169; it reads TVKMLSNLKVLVIAVLLKMIM. The Lumenal segment spans residues 170 to 172; the sequence is KRR. The chain crosses the membrane as a helical span at residues 173–193; sequence FSIIQWEALALLLIGISINQL. The Cytoplasmic portion of the chain corresponds to 194–201; sequence RSLPEGAT. Residues 202–222 traverse the membrane as a helical segment; the sequence is TVAVPIATGAYICTFIFVTVP. Residues 223-245 lie on the Lumenal side of the membrane; the sequence is SLASVYNEYALKSQYDTSIYLQN. A helical membrane pass occupies residues 246–266; sequence LFLYGYGAIFNFLGILGTVIY. Residues 267–282 are Cytoplasmic-facing; it reads KGPGSFDILQGHSRAT. The helical transmembrane segment at 283–303 threads the bilayer; sequence MFLILNNAAQGILSSFFFKYA. Topologically, residues 304-323 are lumenal; sequence DTILKKYSSTVATIFTGIAS. Residues 324–344 form a helical membrane-spanning segment; the sequence is AALFGHILTMNFLLGISIVFI. Residues 345–406 lie on the Cytoplasmic side of the membrane; the sequence is SMHQFFSPLS…SDDRVPLLPR (62 aa).

This sequence belongs to the nucleotide-sugar transporter family. CMP-Sialate:CMP antiporter (TC 2.A.7.12) subfamily.

The protein localises to the golgi apparatus membrane. In terms of biological role, sugar transporter involved in the transport of CMP-sialic acid from the cytoplasm into the Golgi. The polypeptide is CMP-sialic acid transporter 2 (Arabidopsis thaliana (Mouse-ear cress)).